A 1660-amino-acid chain; its full sequence is Cortactin-binding protein 2 (1660 aa).

4 disordered regions span residues 1–26 (MATD…TAEA), 203–222 (KKKT…RSTE), 366–440 (IGVS…LHPG), and 454–478 (GNAN…SPTS). Residues 119 to 276 (RKMQERMSAQ…EQLKRGSDSK (158 aa)) are a coiled coil. The span at 386 to 396 (PSTGSTPDPTS) shows a compositional bias: low complexity. The span at 411 to 422 (QTPGITPQNSQA) shows a compositional bias: polar residues. The residue at position 498 (Arg-498) is an Asymmetric dimethylarginine. A disordered region spans residues 499–596 (FTGPQAGAPP…PPSSLPQGNR (98 aa)). Over residues 583 to 593 (TVASPPSSLPQ) the composition is skewed to polar residues. 5 ANK repeats span residues 709–739 (GRPT…DINY), 743–772 (DGHS…QVNA), 776–805 (NGFT…HINH), 809–838 (GGQT…DRSV), and 842–871 (DGWT…PAHG). Residues 872–897 (NSFSEEESESGVFDLDGEEESPEGKS) form a disordered region. Residues 875–892 (SEEESESGVFDLDGEEES) are compositionally biased toward acidic residues. One copy of the ANK 6 repeat lies at 912-942 (EGWTAAHIAASKGFKNCLEILCRHGGLETER). The disordered stretch occupies residues 1445 to 1477 (CSKKKGESGSWRKVNTSPRRKSGRFSLPTWNKP). At Ser-1524 the chain carries Phosphoserine. Residues 1617 to 1660 (RSKVTQCSQNTKSSSSNTRQIEINNSKEENWNFHKNEHLEKPNK) form a disordered region. Residues 1619–1640 (KVTQCSQNTKSSSSNTRQIEIN) are compositionally biased toward polar residues. A compositionally biased stretch (basic and acidic residues) spans 1641 to 1660 (NSKEENWNFHKNEHLEKPNK).

Interacts with CTTN/cortactin SH3 domain. Interacts with STRN, STRN4/zinedin and MOB4/phocein; this interactions mediate the association with the STRIPAK core complex and may regulate dendritic spine distribution of the STRIPAK complex in hippocampal neurons. Activation of glutamate receptors weakens the interaction with STRN and STRN4.

It localises to the cytoplasm. The protein resides in the cell cortex. The protein localises to the cell projection. It is found in the dendritic spine. Functionally, regulates the dendritic spine distribution of CTTN/cortactin in hippocampal neurons, and thus controls dendritic spinogenesis and dendritic spine maintenance. Associates with the striatin-interacting phosphatase and kinase (STRIPAK) core complex to regulate dendritic spine distribution of the STRIPAK complex in hippocampal neurons. This is Cortactin-binding protein 2 (CTTNBP2) from Ateles geoffroyi (Black-handed spider monkey).